Reading from the N-terminus, the 1407-residue chain is DNA-directed RNA polymerase subunit beta' (1407 aa).

Zn(2+)-binding residues include Cys70, Cys72, Cys85, and Cys88. Residues Asp460, Asp462, and Asp464 each coordinate Mg(2+). Residues Cys814, Cys888, Cys895, and Cys898 each contribute to the Zn(2+) site.

The protein belongs to the RNA polymerase beta' chain family. In terms of assembly, the RNAP catalytic core consists of 2 alpha, 1 beta, 1 beta' and 1 omega subunit. When a sigma factor is associated with the core the holoenzyme is formed, which can initiate transcription. Requires Mg(2+) as cofactor. It depends on Zn(2+) as a cofactor.

It catalyses the reaction RNA(n) + a ribonucleoside 5'-triphosphate = RNA(n+1) + diphosphate. Its function is as follows. DNA-dependent RNA polymerase catalyzes the transcription of DNA into RNA using the four ribonucleoside triphosphates as substrates. The polypeptide is DNA-directed RNA polymerase subunit beta' (Citrobacter koseri (strain ATCC BAA-895 / CDC 4225-83 / SGSC4696)).